Reading from the N-terminus, the 279-residue chain is Digeranylgeranylglyceryl phosphate synthase (279 aa).

6 consecutive transmembrane segments (helical) span residues leucine 27–isoleucine 47, phenylalanine 90–isoleucine 110, valine 127–phenylalanine 147, threonine 199–glycine 219, tryptophan 222–phenylalanine 242, and threonine 259–isoleucine 279.

Belongs to the UbiA prenyltransferase family. DGGGP synthase subfamily. The cofactor is Mg(2+).

It localises to the cell membrane. The catalysed reaction is sn-3-O-(geranylgeranyl)glycerol 1-phosphate + (2E,6E,10E)-geranylgeranyl diphosphate = 2,3-bis-O-(geranylgeranyl)-sn-glycerol 1-phosphate + diphosphate. The protein operates within membrane lipid metabolism; glycerophospholipid metabolism. In terms of biological role, prenyltransferase that catalyzes the transfer of the geranylgeranyl moiety of geranylgeranyl diphosphate (GGPP) to the C2 hydroxyl of (S)-3-O-geranylgeranylglyceryl phosphate (GGGP). This reaction is the second ether-bond-formation step in the biosynthesis of archaeal membrane lipids. The chain is Digeranylgeranylglyceryl phosphate synthase from Methanoculleus marisnigri (strain ATCC 35101 / DSM 1498 / JR1).